The chain runs to 352 residues: Protein RecA (352 aa).

67–74 (GPESSGKT) provides a ligand contact to ATP.

The protein belongs to the RecA family.

Its subcellular location is the cytoplasm. Can catalyze the hydrolysis of ATP in the presence of single-stranded DNA, the ATP-dependent uptake of single-stranded DNA by duplex DNA, and the ATP-dependent hybridization of homologous single-stranded DNAs. It interacts with LexA causing its activation and leading to its autocatalytic cleavage. The sequence is that of Protein RecA from Aggregatibacter actinomycetemcomitans (Actinobacillus actinomycetemcomitans).